Reading from the N-terminus, the 571-residue chain is RUN and FYVE domain-containing protein 4 (571 aa).

In terms of domain architecture, RUN spans 33–166; it reads TDTSAELHRL…VAFELDLQQP (134 aa). Residues 174–207 form a disordered region; sequence MFSESRCSSSTQTQGRRPRKNKDAPKKIPAAYGG. Over residues 178-188 the composition is skewed to polar residues; sequence SRCSSSTQTQG. Positions 408–481 form a coiled coil; it reads EVSLQDEIKS…ERRDAMYQEE (74 aa). The segment at 474–567 adopts an FYVE-type zinc-finger fold; it reads RDAMYQEELG…CCPPCAQGRE (94 aa). The Zn(2+) site is built by Cys-521, Cys-524, Cys-537, Cys-540, Cys-545, Cys-548, Cys-559, and Cys-562.

As to quaternary structure, forms homodimers (via coiled coil domain). Interacts with RAB7A. Forms a ternary complex with RAB7A and LAMP2; the interaction with RAB7A is mediated by RUFY4 (via RUN and coiled coil domains). Interacts with GTP-, but not GDP-bound ARL8A and ARL8B. Interacts with dynactin/DCTN1 and the dynein intermediate chain DYNC1I1/2.

The protein localises to the cytoplasmic vesicle. It is found in the autophagosome. The protein resides in the lysosome. In terms of biological role, ARL8 effector that promotes the coupling of endolysosomes to dynein-dynactin for retrograde transport along microtubules. Acts by binding both GTP-bound ARL8 and dynein-dynactin. In nonneuronal cells, promotes concentration of endolysosomes in the juxtanuclear area. In hippocampal neurons, drives retrograde transport of endolysosomes from the axon to the soma. Positive regulator of macroautophagy in dendritic cells. Increases autophagic flux, probably by stimulating both autophagosome formation and facilitating tethering with lysosomes. Binds to phosphatidylinositol 3-phosphate (PtdIns3P) through its FYVE-type zinc finger. Positive regulator of osteosclast bone-resorbing activity, possibly by promoting late endosome-lysosome fusion by acting as an adapter protein between RAB7A on late endosomes and LAMP2 on primary lysosomes. The protein is RUN and FYVE domain-containing protein 4 (RUFY4) of Homo sapiens (Human).